The sequence spans 397 residues: L-cysteine desulfidase (397 aa).

C23 serves as the catalytic Proton acceptor. Residues C288, C330, and C337 each contribute to the [4Fe-4S] cluster site.

This sequence belongs to the L-cysteine desulfidase family. In terms of assembly, homotrimer. [4Fe-4S] cluster serves as cofactor.

The enzyme catalyses L-cysteine + H2O = hydrogen sulfide + pyruvate + NH4(+) + H(+). In terms of biological role, catalyzes the cleavage of L-cysteine to form 2-aminoprop-2-enoate and sulfide. The former then spontaneously hydrolyzes to pyruvate and NH(3). May be responsible for the production of sulfide required for the biosynthesis of iron-sulfur centers in this archaea. The sequence is that of L-cysteine desulfidase from Methanococcus maripaludis (strain C5 / ATCC BAA-1333).